A 433-amino-acid chain; its full sequence is 23S rRNA (uracil(1939)-C(5))-methyltransferase RlmD (433 aa).

The 59-residue stretch at 10–68 (RTTTRQIITVSVNDLDSFGQGVARHNGKTLFIPGLLPQENAEVTVTEDKKQYARAKVVR) folds into the TRAM domain. Residues Cys-81, Cys-87, Cys-90, and Cys-162 each contribute to the [4Fe-4S] cluster site. Gln-265, Phe-294, Asn-299, Glu-315, Asn-342, and Asp-363 together coordinate S-adenosyl-L-methionine. Cys-389 serves as the catalytic Nucleophile.

It belongs to the class I-like SAM-binding methyltransferase superfamily. RNA M5U methyltransferase family. RlmD subfamily.

The enzyme catalyses uridine(1939) in 23S rRNA + S-adenosyl-L-methionine = 5-methyluridine(1939) in 23S rRNA + S-adenosyl-L-homocysteine + H(+). Catalyzes the formation of 5-methyl-uridine at position 1939 (m5U1939) in 23S rRNA. The sequence is that of 23S rRNA (uracil(1939)-C(5))-methyltransferase RlmD from Escherichia coli O6:K15:H31 (strain 536 / UPEC).